A 418-amino-acid polypeptide reads, in one-letter code: AP-3 complex subunit mu-1 (418 aa).

In terms of domain architecture, MHD spans 176-417; that stretch reads NNEAYFDVIE…ITKAGKFQVR (242 aa).

This sequence belongs to the adaptor complexes medium subunit family. The AP-3 complex associates with the BLOC-1 complex.

It is found in the golgi apparatus. It localises to the cytoplasmic vesicle membrane. In terms of biological role, part of the AP-3 complex, an adaptor-related complex which is not clathrin-associated. The complex is associated with the Golgi region as well as more peripheral structures. It facilitates the budding of vesicles from the Golgi membrane and may be directly involved in trafficking to lysosomes. In concert with the BLOC-1 complex, AP-3 is required to target cargos into vesicles assembled at cell bodies for delivery into neurites and nerve terminals. The polypeptide is AP-3 complex subunit mu-1 (AP3M1) (Gallus gallus (Chicken)).